Reading from the N-terminus, the 122-residue chain is Aspartate 1-decarboxylase (122 aa).

The active-site Schiff-base intermediate with substrate; via pyruvic acid is serine 25. Serine 25 bears the Pyruvic acid (Ser) mark. Threonine 57 provides a ligand contact to substrate. Tyrosine 58 functions as the Proton donor in the catalytic mechanism. Residue 73 to 75 participates in substrate binding; it reads GAA.

Belongs to the PanD family. Heterooctamer of four alpha and four beta subunits. Pyruvate serves as cofactor. Is synthesized initially as an inactive proenzyme, which is activated by self-cleavage at a specific serine bond to produce a beta-subunit with a hydroxyl group at its C-terminus and an alpha-subunit with a pyruvoyl group at its N-terminus.

The protein resides in the cytoplasm. It carries out the reaction L-aspartate + H(+) = beta-alanine + CO2. Its pathway is cofactor biosynthesis; (R)-pantothenate biosynthesis; beta-alanine from L-aspartate: step 1/1. Catalyzes the pyruvoyl-dependent decarboxylation of aspartate to produce beta-alanine. The polypeptide is Aspartate 1-decarboxylase (Bordetella parapertussis (strain 12822 / ATCC BAA-587 / NCTC 13253)).